Consider the following 396-residue polypeptide: L-lactate dehydrogenase (396 aa).

One can recognise an FMN hydroxy acid dehydrogenase domain in the interval 1–380 (MIISAASDYR…TQDSLVQGLG (380 aa)). Tyrosine 24 is a binding site for substrate. 2 residues coordinate FMN: serine 106 and glutamine 127. Tyrosine 129 contacts substrate. Residue threonine 155 participates in FMN binding. Arginine 164 contributes to the substrate binding site. Lysine 251 serves as a coordination point for FMN. Histidine 275 acts as the Proton acceptor in catalysis. Arginine 278 provides a ligand contact to substrate. 306 to 330 (DSGIRNGLDVVRMIALGADTVLLGR) contributes to the FMN binding site.

It belongs to the FMN-dependent alpha-hydroxy acid dehydrogenase family. FMN serves as cofactor.

It is found in the cell inner membrane. The catalysed reaction is (S)-lactate + A = pyruvate + AH2. Functionally, catalyzes the conversion of L-lactate to pyruvate. Is coupled to the respiratory chain. This is L-lactate dehydrogenase from Escherichia coli O127:H6 (strain E2348/69 / EPEC).